The following is a 409-amino-acid chain: Pleckstrin homology domain-containing family O member 1 (409 aa).

The interval 1–24 (MMKKNNSAKRGPQDGNQQPAPPEK) is disordered. A PH domain is found at 21–132 (PPEKVGWVRK…WINALNSAIT (112 aa)). Residues 133-193 (RAKNRILDEV…MLTLDLIQEE (61 aa)) form an interaction with capping proteins (CPs) region. Residues 136–308 (NRILDEVTVE…LPNPGQLSRI (173 aa)) form an interaction with ATM, CKIP, IFP35 and NMI region. The segment at 218 to 267 (LAGSRRRADSDRIQPSADRASSLSRPWEKTDKGATYTPQAPKKLTPTEKG) is disordered. Phosphoserine is present on residues serine 227 and serine 271. Residues 308-409 (IQDLVARKLE…PHSQYRKSLM (102 aa)) are negative regulator of AP-1 activity. 2 disordered regions span residues 325-350 (EVQG…ESEQ) and 390-409 (TPDS…KSLM). The span at 331-340 (DGKRKAKDPP) shows a compositional bias: basic and acidic residues. A Phosphoserine modification is found at serine 342. Over residues 390–402 (TPDSHLRQTTPHS) the composition is skewed to polar residues.

Heterodimer or homodimer. Interacts with CK2 and actin capping subunits (capping protein CP-alpha and CP-beta). CKIP1 and CK2 together inhibit the activity of actin capping protein at the barbed ends of actin filaments. Interacts with ATM, IFP35, JUN, JUND, NMI and PI3K. Interacts with AKT1, AKT2 and AKT3 (each isozyme of PKB), PtdIns(3,5)P2, PtdIns(4,5)P2 and PtdIns(3,4,5)P2. Post-translationally, C-terminal fragments could be released during apoptosis via caspase-3-dependent cleavage. As to expression, abundantly expressed in skeletal muscle and heart, moderately in kidney, liver, brain and placenta and sparingly in the pancreas and lung. Easily detectable in cell lines such as MOLT-4, HEK293 and Jurkat.

Its subcellular location is the cell membrane. The protein localises to the nucleus. It is found in the cytoplasm. Its function is as follows. Plays a role in the regulation of the actin cytoskeleton through its interactions with actin capping protein (CP). May function to target CK2 to the plasma membrane thereby serving as an adapter to facilitate the phosphorylation of CP by protein kinase 2 (CK2). Appears to target ATM to the plasma membrane. Appears to also inhibit tumor cell growth by inhibiting AKT-mediated cell-survival. Also implicated in PI3K-regulated muscle differentiation, the regulation of AP-1 activity (plasma membrane bound AP-1 regulator that translocates to the nucleus) and the promotion of apoptosis induced by tumor necrosis factor TNF. When bound to PKB, it inhibits it probably by decreasing PKB level of phosphorylation. In Homo sapiens (Human), this protein is Pleckstrin homology domain-containing family O member 1 (PLEKHO1).